The chain runs to 157 residues: Probable succinate transporter subunit YjjB (157 aa).

Transmembrane regions (helical) follow at residues 10–30, 55–75, 87–107, and 129–149; these read LAQD…VFNV, AGFN…SIGI, IFTV…TAMI, and FLKA…PGLW.

This sequence belongs to the ThrE exporter (TC 2.A.79) family. The transporter is composed of YjjB and YjjP.

The protein localises to the cell inner membrane. Involved in succinate export with YjjP. Both proteins are required for export. Participates in succinate export, but also in the export of other dicarboxylates, such as fumarate and malate. Contributes to succinate production under both aerobic and anaerobic conditions, and increases fumarate and malate production during anaerobic succinate production. This is Probable succinate transporter subunit YjjB from Klebsiella aerogenes (strain ATCC 13048 / DSM 30053 / CCUG 1429 / JCM 1235 / KCTC 2190 / NBRC 13534 / NCIMB 10102 / NCTC 10006 / CDC 819-56) (Enterobacter aerogenes).